The chain runs to 430 residues: MVAGKLYTYPENFRAFKALIAAQYSGAKLEIAKSFVFGETNKSDAFLKSFPLGKVPAFESADGHCIAESNAIAYYVANETLRGSSDLEKAQIIQWMTFADTEILPASCTWVFPVLGIMQFNKQATARAKEDIDKALQALDDHLLTRTYLVGERITLADIVVTCTLLHLYQHVLDEAFRKSYVNTNRWFITLINQKQVKAVIGDFKLCEKAGEFDPKKYAEFQAAIGSGEKKKTEKAPKAVKAKPEKKEVPKKEQEEPADAAEEALAAEPKSKDPFDEMPKGTFNMDDFKRFYSNNEETKSIPYFWEKFDKENYSIWYSEYKYQDELAKVYMSCNLITGMFQRIEKMRKQAFASVCVFGEDNDSSISGIWVWRGQDLAFKLSPDWQIDYESYDWKKLDPDAQETKDLVTQYFTWTGTDKQGRKFNQGKIFK.

The region spanning 2–84 is the GST N-terminal domain; the sequence is VAGKLYTYPE…YVANETLRGS (83 aa). Positions 85–213 constitute a GST C-terminal domain; it reads SDLEKAQIIQ…FKLCEKAGEF (129 aa). Composition is skewed to basic and acidic residues over residues 232–255 and 269–278; these read KTEK…KEQE and PKSKDPFDEM. Residues 232 to 278 are disordered; the sequence is KTEKAPKAVKAKPEKKEVPKKEQEEPADAAEEALAAEPKSKDPFDEM. In terms of domain architecture, EF-1-gamma C-terminal spans 271–430; it reads SKDPFDEMPK…RKFNQGKIFK (160 aa).

As to quaternary structure, EF-1 is composed of four subunits: alpha, beta, delta, and gamma.

Functionally, probably plays a role in anchoring the complex to other cellular components. The chain is Elongation factor 1-gamma from Artemia salina (Brine shrimp).